Here is a 190-residue protein sequence, read N- to C-terminus: Transcription factor E (190 aa).

The region spanning 4 to 87 is the HTH TFE/IIEalpha-type domain; sequence KNKALLEIAK…YWHLETKRLP (84 aa). A disordered region spans residues 170-190; the sequence is PSPKKEKKKTRAKAKRKTRKK. A compositionally biased stretch (basic residues) spans 174–190; it reads KEKKKTRAKAKRKTRKK.

The protein belongs to the TFE family. In terms of assembly, monomer. Interaction with RNA polymerase subunits RpoF and RpoE is necessary for Tfe stimulatory transcription activity. Able to interact with Tbp and RNA polymerase in the absence of DNA promoter. Interacts both with the preinitiation and elongation complexes.

Transcription factor that plays a role in the activation of archaeal genes transcribed by RNA polymerase. Facilitates transcription initiation by enhancing TATA-box recognition by TATA-box-binding protein (Tbp), and transcription factor B (Tfb) and RNA polymerase recruitment. Not absolutely required for transcription in vitro, but particularly important in cases where Tbp or Tfb function is not optimal. It dynamically alters the nucleic acid-binding properties of RNA polymerases by stabilizing the initiation complex and destabilizing elongation complexes. Seems to translocate with the RNA polymerase following initiation and acts by binding to the non template strand of the transcription bubble in elongation complexes. This is Transcription factor E from Pyrococcus abyssi (strain GE5 / Orsay).